An 805-amino-acid chain; its full sequence is Probable phosphoketolase (805 aa).

Belongs to the XFP family. The cofactor is thiamine diphosphate.

The protein is Probable phosphoketolase of Synechocystis sp. (strain ATCC 27184 / PCC 6803 / Kazusa).